A 291-amino-acid chain; its full sequence is Phosphatidylglycerol--prolipoprotein diacylglyceryl transferase (291 aa).

The next 7 helical transmembrane spans lie at V21–A41, L60–Y80, W96–F116, F130–G150, S198–I218, G225–F245, and I260–W280. R143 contacts a 1,2-diacyl-sn-glycero-3-phospho-(1'-sn-glycerol).

The protein belongs to the Lgt family.

The protein resides in the cell inner membrane. The enzyme catalyses L-cysteinyl-[prolipoprotein] + a 1,2-diacyl-sn-glycero-3-phospho-(1'-sn-glycerol) = an S-1,2-diacyl-sn-glyceryl-L-cysteinyl-[prolipoprotein] + sn-glycerol 1-phosphate + H(+). It participates in protein modification; lipoprotein biosynthesis (diacylglyceryl transfer). Functionally, catalyzes the transfer of the diacylglyceryl group from phosphatidylglycerol to the sulfhydryl group of the N-terminal cysteine of a prolipoprotein, the first step in the formation of mature lipoproteins. The polypeptide is Phosphatidylglycerol--prolipoprotein diacylglyceryl transferase (Klebsiella pneumoniae (strain 342)).